The sequence spans 374 residues: Probable tRNA pseudouridine synthase D (374 aa).

The active-site Nucleophile is Asp-81. Positions 141–340 constitute a TRUD domain; the sequence is VFPNYFDVQR…RKGFQKMYDL (200 aa).

This sequence belongs to the pseudouridine synthase TruD family.

It carries out the reaction uridine(13) in tRNA = pseudouridine(13) in tRNA. Could be responsible for synthesis of pseudouridine from uracil-13 in transfer RNAs. The chain is Probable tRNA pseudouridine synthase D from Nanoarchaeum equitans (strain Kin4-M).